We begin with the raw amino-acid sequence, 646 residues long: Phosphomethylpyrimidine synthase (646 aa).

The segment covering 1–13 (MNIRSNPDTTRPA) has biased composition (polar residues). The interval 1 to 30 (MNIRSNPDTTRPAVTTGALPSSRKMFSAPD) is disordered. Residues Asn-221, Met-250, Tyr-279, His-315, 335–337 (SRG), 376–379 (DGLR), and Glu-415 contribute to the substrate site. Zn(2+) is bound at residue His-419. Tyr-442 serves as a coordination point for substrate. Residue His-483 coordinates Zn(2+). Residues Cys-563, Cys-566, and Cys-571 each contribute to the [4Fe-4S] cluster site.

The protein belongs to the ThiC family. As to quaternary structure, homodimer. [4Fe-4S] cluster is required as a cofactor.

The catalysed reaction is 5-amino-1-(5-phospho-beta-D-ribosyl)imidazole + S-adenosyl-L-methionine = 4-amino-2-methyl-5-(phosphooxymethyl)pyrimidine + CO + 5'-deoxyadenosine + formate + L-methionine + 3 H(+). Its pathway is cofactor biosynthesis; thiamine diphosphate biosynthesis. In terms of biological role, catalyzes the synthesis of the hydroxymethylpyrimidine phosphate (HMP-P) moiety of thiamine from aminoimidazole ribotide (AIR) in a radical S-adenosyl-L-methionine (SAM)-dependent reaction. This Nitrobacter winogradskyi (strain ATCC 25391 / DSM 10237 / CIP 104748 / NCIMB 11846 / Nb-255) protein is Phosphomethylpyrimidine synthase.